The following is a 789-amino-acid chain: Aconitate hydratase, mitochondrial (789 aa).

Residues 1–32 (MFCKISRAPARMGSRIFTQSTLRSFSCAPVAA) constitute a mitochondrion transit peptide. Substrate-binding positions include Gln106 and 199 to 201 (DSH). Residues Cys392, Cys455, and Cys458 each contribute to the [4Fe-4S] cluster site. Substrate is bound by residues Arg481, Arg486, Arg613, and 676 to 677 (SR).

This sequence belongs to the aconitase/IPM isomerase family. In terms of assembly, monomer. It depends on [4Fe-4S] cluster as a cofactor.

It localises to the mitochondrion. It carries out the reaction citrate = D-threo-isocitrate. The protein operates within carbohydrate metabolism; tricarboxylic acid cycle; isocitrate from oxaloacetate: step 2/2. Catalyzes the isomerization of citrate to isocitrate via cis-aconitate, a step in the citric acid cycle. In Schizosaccharomyces pombe (strain 972 / ATCC 24843) (Fission yeast), this protein is Aconitate hydratase, mitochondrial.